Here is a 562-residue protein sequence, read N- to C-terminus: Putative transport protein YPA_0617 (562 aa).

Helical transmembrane passes span 8–28 (LLNG…LCLG), 37–57 (LGNA…HFAI), 66–86 (FMLF…SIFF), 94–114 (MLAL…GKLF), 118–138 (IGLT…LVGA), and 158–178 (NLSL…ILGA). 2 consecutive RCK C-terminal domains span residues 202–288 (LDTD…SFRN) and 290–373 (KEVF…KIGF). 5 helical membrane passes run 383–403 (LLAF…TFQF), 406–426 (FSFG…LGFL), 447–467 (FGLM…INSS), 475–495 (MLIS…VFGA), and 541–561 (IANV…PGIL).

Belongs to the AAE transporter (TC 2.A.81) family. YbjL subfamily.

It localises to the cell membrane. The protein is Putative transport protein YPA_0617 of Yersinia pestis bv. Antiqua (strain Antiqua).